A 122-amino-acid polypeptide reads, in one-letter code: Piercer of microtubule wall 2 protein (122 aa).

Positions 1-23 are enriched in basic and acidic residues; it reads MARETDCDLDKKTSLTSDAEMRP. Disordered stretches follow at residues 1-26 and 99-122; these read MARETDCDLDKKTSLTSDAEMRPEPP and QNNSLNVGPDRTRTIDSPNYQHTL. A compositionally biased stretch (polar residues) spans 113 to 122; sequence IDSPNYQHTL.

It belongs to the PIERCE2 family. In terms of assembly, microtubule inner protein component of sperm flagellar doublet microtubules. Interacts with CFAP53, ODAD1 and ODAD3; the interactions link the outer dynein arms docking complex (ODA-DC) to the internal microtubule inner proteins (MIP) in cilium axoneme.

The protein localises to the cytoplasm. It is found in the cytoskeleton. The protein resides in the cilium axoneme. Its subcellular location is the flagellum axoneme. Its function is as follows. Microtubule inner protein involved in the attachment of outer dynein arms (ODAs) to dynein-decorated doublet microtubules (DMTs) in cilia axoneme, which is required for motile cilia beating. The polypeptide is Piercer of microtubule wall 2 protein (Mus musculus (Mouse)).